We begin with the raw amino-acid sequence, 477 residues long: UDP-N-acetylmuramate--L-alanine ligase (477 aa).

An ATP-binding site is contributed by 120 to 126 (GSHGKTT).

This sequence belongs to the MurCDEF family.

The protein resides in the cytoplasm. The enzyme catalyses UDP-N-acetyl-alpha-D-muramate + L-alanine + ATP = UDP-N-acetyl-alpha-D-muramoyl-L-alanine + ADP + phosphate + H(+). It participates in cell wall biogenesis; peptidoglycan biosynthesis. Functionally, cell wall formation. The chain is UDP-N-acetylmuramate--L-alanine ligase from Rickettsia canadensis (strain McKiel).